The primary structure comprises 236 residues: MQTHNNVDPQEIAKFEKMAATWWDPEGEFKPLHNLNPLRLNYIDQIAGGIFGKQVLDVGCGGGILSESMAKIGAQVTGLDMGDEPLDVARLHAIETGVLINYVKNTAEAHRDEHRGQYDVVTCMEMLEHVPNPSSVIQACADMVKPGGFVFFSTINRNIRAYVETILGAEYLLKMLPVGTHDHNKFIKPSELIDLADKAELFCSDAVGITYNPITDIFRYTKSLEVNYMIATVKND.

S-adenosyl-L-methionine-binding residues include R39, G59, D80, and M124.

Belongs to the methyltransferase superfamily. UbiG/COQ3 family.

The enzyme catalyses a 3-demethylubiquinol + S-adenosyl-L-methionine = a ubiquinol + S-adenosyl-L-homocysteine + H(+). It carries out the reaction a 3-(all-trans-polyprenyl)benzene-1,2-diol + S-adenosyl-L-methionine = a 2-methoxy-6-(all-trans-polyprenyl)phenol + S-adenosyl-L-homocysteine + H(+). Its pathway is cofactor biosynthesis; ubiquinone biosynthesis. Functionally, O-methyltransferase that catalyzes the 2 O-methylation steps in the ubiquinone biosynthetic pathway. This Shewanella halifaxensis (strain HAW-EB4) protein is Ubiquinone biosynthesis O-methyltransferase.